Here is an 80-residue protein sequence, read N- to C-terminus: RNA-binding protein Hfq (80 aa).

One can recognise a Sm domain in the interval 10–70 (DIFLNQVRKE…ISTISPMKSV (61 aa)).

Belongs to the Hfq family. As to quaternary structure, homohexamer.

RNA chaperone that binds small regulatory RNA (sRNAs) and mRNAs to facilitate mRNA translational regulation in response to envelope stress, environmental stress and changes in metabolite concentrations. Also binds with high specificity to tRNAs. This chain is RNA-binding protein Hfq, found in Ruminiclostridium cellulolyticum (strain ATCC 35319 / DSM 5812 / JCM 6584 / H10) (Clostridium cellulolyticum).